The chain runs to 348 residues: Protein pof5 (348 aa).

It to yeast YDR306C. Interacts with skp1.

The protein resides in the mitochondrion. The chain is Protein pof5 (pof5) from Schizosaccharomyces pombe (strain 972 / ATCC 24843) (Fission yeast).